A 619-amino-acid polypeptide reads, in one-letter code: Replication restart protein PriA (619 aa).

The region spanning 119-285 (LKELQKHSAS…KDKALVRLKG (167 aa)) is the Helicase ATP-binding domain. Residue 132–139 (GDTGSGKT) coordinates ATP. The short motif at 228 to 231 (DEEH) is the DEAH box element. Residues Cys-336, Cys-339, Cys-345, Cys-348, Cys-363, Cys-366, Cys-376, and Cys-379 each coordinate Zn(2+). One can recognise a Helicase C-terminal domain in the interval 371–532 (PIPKICSACQ…ELYPPFSRLC (162 aa)).

The protein belongs to the helicase family. PriA subfamily. Component of the replication restart primosome. The cofactor is Zn(2+).

The enzyme catalyses Couples ATP hydrolysis with the unwinding of duplex DNA by translocating in the 3'-5' direction.. It catalyses the reaction ATP + H2O = ADP + phosphate + H(+). Functionally, initiates the restart of stalled replication forks, which reloads the replicative helicase on sites other than the origin of replication. Recognizes and binds to abandoned replication forks and remodels them to uncover a helicase loading site. Promotes assembly of the primosome at these replication forks. In terms of biological role, important for survival of the bacteria in host cells. The sequence is that of Replication restart protein PriA from Helicobacter pylori (strain ATCC 700392 / 26695) (Campylobacter pylori).